A 659-amino-acid polypeptide reads, in one-letter code: 4-alpha-glucanotransferase (659 aa).

The Nucleophile role is filled by glutamate 123. Aspartate 214 functions as the Proton donor in the catalytic mechanism.

The protein belongs to the glycosyl hydrolase 57 family. Homodimer.

The catalysed reaction is Transfers a segment of a (1-&gt;4)-alpha-D-glucan to a new position in an acceptor, which may be glucose or a (1-&gt;4)-alpha-D-glucan.. With respect to regulation, inhibited by p-chloromercuribenzoic acid, monoiodoacetic acid, mercury and nickel ions. Functionally, catalyzes the transglycosylation of maltooligosaccharides, yielding maltooligosaccharides of various lengths and glucose. Maltose and glucose can be used as acceptors in the transfer reaction. This Thermococcus litoralis (strain ATCC 51850 / DSM 5473 / JCM 8560 / NS-C) protein is 4-alpha-glucanotransferase (jgt).